A 214-amino-acid chain; its full sequence is Transcriptional regulatory protein ComA (214 aa).

Positions Lys3–Leu121 constitute a Response regulatory domain. Asp55 is subject to 4-aspartylphosphate. One can recognise an HTH luxR-type domain in the interval Ser147–Gly212. The H-T-H motif DNA-binding region spans Asn171 to Thr190.

Post-translationally, phosphorylated by ComP.

Its subcellular location is the cytoplasm. Its function is as follows. Response regulator in the two-component regulatory system ComP/ComA involved in a major quorum response pathway that regulates the development of genetic competence. Regulates directly the expression of over 20 genes, including genes of the srfA operon, degQ, rapA, rapC, rapE, rapF, etc. Regulates indirectly, through the regulation of comK transcription, the expression of late competence genes. The polypeptide is Transcriptional regulatory protein ComA (comA) (Bacillus subtilis (strain 168)).